The sequence spans 278 residues: 3-methyl-2-oxobutanoate hydroxymethyltransferase (278 aa).

Aspartate 44 and aspartate 83 together coordinate Mg(2+). Residues 44-45 (DS), aspartate 83, and lysine 112 contribute to the 3-methyl-2-oxobutanoate site. Mg(2+) is bound at residue glutamate 114. Residue glutamate 181 is the Proton acceptor of the active site.

It belongs to the PanB family. Homodecamer; pentamer of dimers. The cofactor is Mg(2+).

The protein resides in the cytoplasm. The catalysed reaction is 3-methyl-2-oxobutanoate + (6R)-5,10-methylene-5,6,7,8-tetrahydrofolate + H2O = 2-dehydropantoate + (6S)-5,6,7,8-tetrahydrofolate. The protein operates within cofactor biosynthesis; (R)-pantothenate biosynthesis; (R)-pantoate from 3-methyl-2-oxobutanoate: step 1/2. In terms of biological role, catalyzes the reversible reaction in which hydroxymethyl group from 5,10-methylenetetrahydrofolate is transferred onto alpha-ketoisovalerate to form ketopantoate. The sequence is that of 3-methyl-2-oxobutanoate hydroxymethyltransferase from Roseiflexus sp. (strain RS-1).